The primary structure comprises 473 residues: MTRGRVIQVMGPVVDVKFENGHLPAIYNALKIQHKARNENEVDIDLTLEVALHLGDDTVRTIAMASTDGLIRGMEVIDTGAPISVPVGEVTLGRVFNVLGEPIDLEGDIPADARRDPIHRPAPKFEELATEVEILETGIKVVDLLAPYIKGGKIGLFGGAGVGKTVLIQELIHNIAQEHGGISVFAGVGERTREGNDLYHEMKDSGVISKTAMVFGQMNEPPGARMRVALTGLTMAEYFRDEQGQDVLLFIDNIFRFTQAGSEVSALLGRMPSAVGYQPTLATEMGQLQERITSTAKGSTTSIQAIYVPADDYTDPAPATTFSHLDATTNLERNVAEMGIYPAVDPLASTSRALAPEIVGEEHYQVARKVQQTLQRYKELQDIIAILGMDELSDEDKLVVHRARRIQFFLSQNFHVAEQFTGQPGSYVPVKETVRGFKEILEGKYDHLPEDRFRLVGRIEEVVEKAKAMGVEV.

ATP is bound at residue 158–165 (GGAGVGKT).

It belongs to the ATPase alpha/beta chains family. In terms of assembly, F-type ATPases have 2 components, CF(1) - the catalytic core - and CF(0) - the membrane proton channel. CF(1) has five subunits: alpha(3), beta(3), gamma(1), delta(1), epsilon(1). CF(0) has three main subunits: a(1), b(2) and c(9-12). The alpha and beta chains form an alternating ring which encloses part of the gamma chain. CF(1) is attached to CF(0) by a central stalk formed by the gamma and epsilon chains, while a peripheral stalk is formed by the delta and b chains.

It localises to the cell membrane. It carries out the reaction ATP + H2O + 4 H(+)(in) = ADP + phosphate + 5 H(+)(out). Produces ATP from ADP in the presence of a proton gradient across the membrane. The catalytic sites are hosted primarily by the beta subunits. The protein is ATP synthase subunit beta of Bacillus caldotenax.